A 121-amino-acid polypeptide reads, in one-letter code: Ribosome-binding factor A (121 aa).

Belongs to the RbfA family. As to quaternary structure, monomer. Binds 30S ribosomal subunits, but not 50S ribosomal subunits or 70S ribosomes.

Its subcellular location is the cytoplasm. In terms of biological role, one of several proteins that assist in the late maturation steps of the functional core of the 30S ribosomal subunit. Associates with free 30S ribosomal subunits (but not with 30S subunits that are part of 70S ribosomes or polysomes). Required for efficient processing of 16S rRNA. May interact with the 5'-terminal helix region of 16S rRNA. The protein is Ribosome-binding factor A of Lactobacillus acidophilus (strain ATCC 700396 / NCK56 / N2 / NCFM).